A 306-amino-acid polypeptide reads, in one-letter code: UDP-3-O-acyl-N-acetylglucosamine deacetylase (306 aa).

The Zn(2+) site is built by H79, H238, and D242. H265 (proton donor) is an active-site residue.

Belongs to the LpxC family. Zn(2+) serves as cofactor.

It carries out the reaction a UDP-3-O-[(3R)-3-hydroxyacyl]-N-acetyl-alpha-D-glucosamine + H2O = a UDP-3-O-[(3R)-3-hydroxyacyl]-alpha-D-glucosamine + acetate. It participates in glycolipid biosynthesis; lipid IV(A) biosynthesis; lipid IV(A) from (3R)-3-hydroxytetradecanoyl-[acyl-carrier-protein] and UDP-N-acetyl-alpha-D-glucosamine: step 2/6. Catalyzes the hydrolysis of UDP-3-O-myristoyl-N-acetylglucosamine to form UDP-3-O-myristoylglucosamine and acetate, the committed step in lipid A biosynthesis. In Shewanella sediminis (strain HAW-EB3), this protein is UDP-3-O-acyl-N-acetylglucosamine deacetylase.